The sequence spans 212 residues: General odorant-binding protein 68 (212 aa).

The N-terminal stretch at methionine 1–alanine 28 is a signal peptide. 3 cysteine pairs are disulfide-bonded: cysteine 64-cysteine 85, cysteine 80-cysteine 152, and cysteine 130-cysteine 162.

The protein belongs to the PBP/GOBP family.

The protein localises to the secreted. Its function is as follows. Present in the aqueous fluid surrounding olfactory sensory dendrites and are thought to aid in the capture and transport of hydrophobic odorants into and through this fluid. In Anopheles gambiae (African malaria mosquito), this protein is General odorant-binding protein 68 (Obp68).